A 146-amino-acid polypeptide reads, in one-letter code: Large ribosomal subunit protein uL15 (146 aa).

The segment at 1–39 (MTLKLHNLRPAPGAKTAKTRVGRGEGSKGKTAGRGTKGT) is disordered.

Belongs to the universal ribosomal protein uL15 family. In terms of assembly, part of the 50S ribosomal subunit.

Binds to the 23S rRNA. In Nocardioides sp. (strain ATCC BAA-499 / JS614), this protein is Large ribosomal subunit protein uL15.